The following is a 1726-amino-acid chain: Merozoite surface protein 1 (1726 aa).

The signal sequence occupies residues methionine 1–cysteine 19. Residues lysine 61–serine 124 show a composition bias toward low complexity. The interval lysine 61–alanine 149 is disordered. Residues arginine 125–threonine 134 are compositionally biased toward polar residues. Asparagine 133 is a glycosylation site (N-linked (GlcNAc...) asparagine). The segment covering serine 135–alanine 144 has biased composition (low complexity). N-linked (GlcNAc...) asparagine glycosylation is found at asparagine 272, asparagine 501, asparagine 567, and asparagine 638. The tract at residues serine 735–threonine 771 is disordered. Positions glutamate 755 to glutamate 765 are enriched in acidic residues. 7 N-linked (GlcNAc...) asparagine glycosylation sites follow: asparagine 827, asparagine 924, asparagine 944, asparagine 990, asparagine 1016, asparagine 1114, and asparagine 1221. Residues threonine 914–asparagine 952 are compositionally biased toward low complexity. Residues threonine 914–alanine 961 are disordered. 2 disordered regions span residues valine 1254–proline 1284 and lysine 1476–lysine 1497. Residues valine 1270–proline 1284 are compositionally biased toward polar residues. The segment covering serine 1481–proline 1490 has biased composition (pro residues). N-linked (GlcNAc...) asparagine glycosylation occurs at asparagine 1613. EGF-like domains follow at residues histidine 1617–proline 1657 and asparagine 1658–serine 1705. Cystine bridges form between cysteine 1619–cysteine 1630, cysteine 1624–cysteine 1640, cysteine 1642–cysteine 1653, cysteine 1661–cysteine 1674, cysteine 1668–cysteine 1688, and cysteine 1690–cysteine 1704. Serine 1705 carries the GPI-anchor amidated serine lipid modification. A propeptide spans serine 1706–isoleucine 1726 (removed in mature form).

In terms of assembly, forms a complex composed of subunits p83, p30, p38, and p42 which remain non-covalently associated; the complex is formed at the merozoite surface prior to egress from host erythrocytes. Forms a complex composed of processed MSP1 subunits, MSP6 subunit p36 and MSP7; the complex is formed at the merozoite surface prior to egress from host erythrocytes. Within the complex, interacts (via subunit p38) with MSP6 subunit p36 and (via subunits p83, p30 and p38) with MSP7 (via subunit p22). Forms a complex composed of MSP1, MSP6, DBLMSP1 and DBLMSP2. Within the complex, interacts (via subunit p38) with DBLMSP1 and DBLMSP2. Forms a complex composed of MSP1, and rhoptry proteins RhopH3, RAP1 and CLAG9/RhopH3. Within the complex, interacts (via subunits p42 and p19) with RhopH3 (via C-terminus). Forms a complex composed of MSP1, MSP6, MSP7, MSP9 and MSP3; within the complex, MSP6 and MSP9 mediate the binding to the host erythrocyte. Interacts (via subunits p19 and p42) with MSP9; the interaction is direct; MSP1 subunits p19 or p42, and MSP9 form a co-ligand complex that interacts with host SLC4A1/Band 3 protein. May interact with PFD6. Interacts with host spectrin. Interacts with host glycophorin GYPA in a sialic acid-independent manner. As to quaternary structure, interacts with host proinflammatory cytokine S100P; the interaction blocks S100P inflammatory and chemotactic activities. In terms of assembly, interacts with host SLC4A1/Band 3 (via 5ABC region) on the host erythrocyte surface in a sialic acid-independent manner. Post-translationally, the p190 precursor is cleaved by SUB1 prior to merozoite egress into 4 subunits p83, p30, p38, and p42 which remain non-covalently associated. SUB1-mediated proteolytic cleavage occurs in an orderly manner; the first cleavage occurs at the p30/p38 site, followed by cleavage at the p83/p30 site, the last cleavage occurs at the p38/p42 site. The order of cleavage is essential for parasite viability. SUB1-mediated processing is essential for merozoite egress. In a second processing step during erythrocyte invasion, p42 is cleaved by SUB2 into p33 and p19; the latter remains attached to the merozoite surface via its GPI-anchor and is endocytosed during the subsequent ring stage.

Its subcellular location is the cell membrane. It localises to the secreted. The protein resides in the vacuole membrane. In terms of biological role, during the asexual blood stage, involved in merozoite egress from host erythrocytes possibly via its interaction with the host cytoskeleton protein spectrin resulting in the destabilization of the host cytoskeleton and thus leading to erythrocyte cell membrane rupture. Involved in the binding to host erythrocytes and is required for host erythrocyte invasion. Functionally, by binding to host proinflammatory cytokine S100P may interfere with host immune responses. Involved in merozoite invasion of host erythrocytes. May play a role in the biogenesis and/or function of the food vacuole during the intraerythrocytic development. This is Merozoite surface protein 1 from Plasmodium falciparum (isolate Palo Alto / Uganda).